We begin with the raw amino-acid sequence, 499 residues long: Importin subunit alpha-8 (499 aa).

The region spanning 1–57 is the IBB domain; it reads MATSKAPKERLKNYKYRGKEMSLPRQQRIASSLQLRKTRKDEQVLKRRNIDLFSSDM. ARM repeat units lie at residues 101–141, 144–183, 186–226, 229–268, 271–310, 313–352, 354–393, and 397–436; these read TPPL…NIAS, SEQTRAVVKEGAIQPLIELLCSPHLTVSEQAVWALGNIAG, AEFR…NLCR, DPYPSESAVRQMLPPLCQLLLHRDNEILADTCWALSYLTK, KEYIHHVVTTGILPRLVELMTSSELSISIPCLHTIGNIVA, DEQTQMAIDAGMLKVLGQVLKHPKTSIQVLAAWTMSNVAA, PRHQVEQLLCNLLPILVDLLRNAELKVQKEVVCTVINIAT, and QDQLTLLAHSGILEPMLSLLSAPDLEVVIIVLDIISYLLQ.

The protein belongs to the importin alpha family. As to quaternary structure, binds to importin subunit beta-1/KPNB1 via the IBB domain; this complex dissociates in the presence of RAN-GTP. Shows a limited binding to the RB1 nuclear localization signal (NLS), but not to the SV40, nor NPM1 NLSs. Interacts with RSL1D1. As to expression, expressed predominantly in ovary. Isoform 1 is the predominant form.

It localises to the nucleus. Its function is as follows. Functions in nuclear protein import. This is Importin subunit alpha-8 (Kpna7) from Mus musculus (Mouse).